The primary structure comprises 352 residues: Nicotinate-nucleotide--dimethylbenzimidazole phosphoribosyltransferase (352 aa).

Glutamate 318 (proton acceptor) is an active-site residue.

It belongs to the CobT family.

The enzyme catalyses 5,6-dimethylbenzimidazole + nicotinate beta-D-ribonucleotide = alpha-ribazole 5'-phosphate + nicotinate + H(+). The protein operates within nucleoside biosynthesis; alpha-ribazole biosynthesis; alpha-ribazole from 5,6-dimethylbenzimidazole: step 1/2. Functionally, catalyzes the synthesis of alpha-ribazole-5'-phosphate from nicotinate mononucleotide (NAMN) and 5,6-dimethylbenzimidazole (DMB). This chain is Nicotinate-nucleotide--dimethylbenzimidazole phosphoribosyltransferase, found in Dehalococcoides mccartyi (strain ATCC BAA-2100 / JCM 16839 / KCTC 5957 / BAV1).